Consider the following 1641-residue polypeptide: Vitellogenin-1 (1641 aa).

A signal peptide spans 1-18 (MWYLAFLLIIGAYAADHA). Positions 19–790 (WETGNEYHYL…SQDTTVPKSS (772 aa)) constitute a Vitellogenin domain. Cysteines 172 and 211 form a disulfide. A compositionally biased stretch (polar residues) spans 322 to 334 (LRQPSVSLNSMEA). Residues 322 to 372 (LRQPSVSLNSMEARSSENSNEENRSDDDRSNFLSNSGEEREYLQSKPTLNE) form a disordered region. The segment covering 342–351 (EENRSDDDRS) has biased composition (basic and acidic residues). N-linked (GlcNAc...) asparagine glycosylation is found at Asn-344, Asn-549, Asn-566, Asn-831, Asn-875, Asn-898, Asn-1001, Asn-1053, Asn-1268, Asn-1393, Asn-1396, Asn-1505, and Asn-1523. Positions 1410–1597 (ESVCVLDKTH…TYAMTQESCQ (188 aa)) constitute a VWFD domain. Cysteines 1435 and 1596 form a disulfide. The tract at residues 1594–1641 (ESCQGPAPENKRKAEQSTCMSRSYRPSDVISDREAGRSSTKNRGWGYH) is disordered.

As to expression, hemolymph.

It localises to the secreted. In terms of biological role, precursor of the egg-yolk proteins that are sources of nutrients during embryonic development. This chain is Vitellogenin-1, found in Solenopsis invicta (Red imported fire ant).